The following is a 628-amino-acid chain: DNA-directed RNA polymerase subunit gamma (628 aa).

Zn(2+) is bound by residues C71, C73, C86, and C89. Mg(2+) is bound by residues D467, D469, and D471.

This sequence belongs to the RNA polymerase beta' chain family. RpoC1 subfamily. In terms of assembly, in cyanobacteria the RNAP catalytic core is composed of 2 alpha, 1 beta, 1 beta', 1 gamma and 1 omega subunit. When a sigma factor is associated with the core the holoenzyme is formed, which can initiate transcription. The cofactor is Mg(2+). It depends on Zn(2+) as a cofactor.

It carries out the reaction RNA(n) + a ribonucleoside 5'-triphosphate = RNA(n+1) + diphosphate. Functionally, DNA-dependent RNA polymerase catalyzes the transcription of DNA into RNA using the four ribonucleoside triphosphates as substrates. In Crocosphaera subtropica (strain ATCC 51142 / BH68) (Cyanothece sp. (strain ATCC 51142)), this protein is DNA-directed RNA polymerase subunit gamma.